The primary structure comprises 481 residues: UDP-glucose 6-dehydrogenase (481 aa).

Residues 16-21 (GAGYVG), aspartate 41, lysine 46, 94-98 (VNTPT), 135-136 (ST), and glutamate 172 each bind NAD(+). Residues 168–172 (EFLAE), 227–231 (KLVAN), arginine 267, and 274–280 (QASVGFG) contribute to the substrate site. The Nucleophile role is filled by cysteine 283. Residue 283–286 (CFQK) participates in NAD(+) binding. A substrate-binding site is contributed by 345 to 346 (FK). Residue arginine 353 coordinates NAD(+). A substrate-binding site is contributed by arginine 447.

This sequence belongs to the UDP-glucose/GDP-mannose dehydrogenase family. As to expression, expressed in the vulva and in oocytes.

The catalysed reaction is UDP-alpha-D-glucose + 2 NAD(+) + H2O = UDP-alpha-D-glucuronate + 2 NADH + 3 H(+). It participates in nucleotide-sugar biosynthesis; UDP-alpha-D-glucuronate biosynthesis; UDP-alpha-D-glucuronate from UDP-alpha-D-glucose: step 1/1. Involved in the biosynthesis of glycosaminoglycans; hyaluronan, chondroitin sulfate, and heparan sulfate. The polypeptide is UDP-glucose 6-dehydrogenase (sqv-4) (Caenorhabditis elegans).